The primary structure comprises 315 residues: Tetraacyldisaccharide 4'-kinase (315 aa).

Residue serine 45 to threonine 52 coordinates ATP.

The protein belongs to the LpxK family.

The enzyme catalyses a lipid A disaccharide + ATP = a lipid IVA + ADP + H(+). It functions in the pathway glycolipid biosynthesis; lipid IV(A) biosynthesis; lipid IV(A) from (3R)-3-hydroxytetradecanoyl-[acyl-carrier-protein] and UDP-N-acetyl-alpha-D-glucosamine: step 6/6. Transfers the gamma-phosphate of ATP to the 4'-position of a tetraacyldisaccharide 1-phosphate intermediate (termed DS-1-P) to form tetraacyldisaccharide 1,4'-bis-phosphate (lipid IVA). This is Tetraacyldisaccharide 4'-kinase from Aquifex aeolicus (strain VF5).